Reading from the N-terminus, the 408-residue chain is Bone morphogenetic protein 4 (408 aa).

A signal peptide spans 1–19 (MIPGNRMLMVVLLCQVLLG). A propeptide spanning residues 20-292 (GASHASLIPE…HTLTRRRAKR (273 aa)) is cleaved from the precursor. Position 91 is a phosphoserine (S91). A disordered region spans residues 91–111 (SGEEEEEEQSQGTGLEYPERP). Residues N144 and N209 are each glycosylated (N-linked (GlcNAc...) asparagine). The tract at residues 281-307 (RGHTLTRRRAKRSPKHHPQRSRKKNKN) is disordered. A compositionally biased stretch (basic residues) spans 284-307 (TLTRRRAKRSPKHHPQRSRKKNKN). 3 cysteine pairs are disulfide-bonded: C308–C373, C337–C405, and C341–C407. 2 N-linked (GlcNAc...) asparagine glycosylation sites follow: N350 and N365.

The protein belongs to the TGF-beta family. As to quaternary structure, homodimer; disulfide-linked. Interacts with SOSTDC1, GREM2, RGMA, RGMB and RGMC. Part of a complex consisting of TWSG1 and CHRD. Interacts with the serine proteases, HTRA1 and HTRA3; the interaction with either inhibits BMP4-mediated signaling. The HTRA protease activity is required for this inhibition. Interacts with FBN1 (via N-terminal domain) and FBN2. Interacts with type I receptor BMPR1A. Interacts with type II receptor BMPR2. Interacts with FSTL1; this interaction inhibits the activation of the BMP4/Smad1/5/8 signaling pathway. Interacts with SCUBE3. Interacts with TGFBR3. In the cochlea, detected in nonprosensory regions and outer sulcus (at protein level). Prior to gastrulation, expressed in the extraembryonic ectoderm. Later, expressed in the extraembryonic mesoderm.

It localises to the secreted. Its subcellular location is the extracellular space. It is found in the extracellular matrix. Functionally, growth factor of the TGF-beta superfamily that plays essential roles in many developmental processes, including neurogenesis, vascular development, angiogenesis and osteogenesis. Acts in concert with PTHLH/PTHRP to stimulate ductal outgrowth during embryonic mammary development and to inhibit hair follicle induction. Initiates the canonical BMP signaling cascade by associating with type I receptor BMPR1A and type II receptor BMPR2. Once all three components are bound together in a complex at the cell surface, BMPR2 phosphorylates and activates BMPR1A. In turn, BMPR1A propagates signal by phosphorylating SMAD1/5/8 that travel to the nucleus and act as activators and repressors of transcription of target genes. Positively regulates the expression of odontogenic development regulator MSX1 via inducing the IPO7-mediated import of SMAD1 to the nucleus. Required for MSX1-mediated mesenchymal molar tooth bud development beyond the bud stage, via promoting Wnt signaling. Acts as a positive regulator of odontoblast differentiation during mesenchymal tooth germ formation, expression is repressed during the bell stage by MSX1-mediated inhibition of CTNNB1 signaling. Able to induce its own expression in dental mesenchymal cells and also in the neighboring dental epithelial cells via an MSX1-mediated pathway. Can also signal through non-canonical BMP pathways such as ERK/MAP kinase, PI3K/Akt or SRC cascades. For example, induces SRC phosphorylation which, in turn, activates VEGFR2, leading to an angiogenic response. The polypeptide is Bone morphogenetic protein 4 (Mus musculus (Mouse)).